The following is a 225-amino-acid chain: Small ribosomal subunit protein uS7 (225 aa).

The protein belongs to the universal ribosomal protein uS7 family. Component of the small ribosomal subunit. Mature ribosomes consist of a small (40S) and a large (60S) subunit. The 40S subunit contains about 32 different proteins and 1 molecule of RNA (18S). The 60S subunit contains 45 different proteins and 3 molecules of RNA (25S, 5.8S and 5S).

Its subcellular location is the cytoplasm. Component of the ribosome, a large ribonucleoprotein complex responsible for the synthesis of proteins in the cell. The small ribosomal subunit (SSU) binds messenger RNAs (mRNAs) and translates the encoded message by selecting cognate aminoacyl-transfer RNA (tRNA) molecules. The large subunit (LSU) contains the ribosomal catalytic site termed the peptidyl transferase center (PTC), which catalyzes the formation of peptide bonds, thereby polymerizing the amino acids delivered by tRNAs into a polypeptide chain. The nascent polypeptides leave the ribosome through a tunnel in the LSU and interact with protein factors that function in enzymatic processing, targeting, and the membrane insertion of nascent chains at the exit of the ribosomal tunnel. The chain is Small ribosomal subunit protein uS7 (RPS5) from Candida albicans (strain SC5314 / ATCC MYA-2876) (Yeast).